We begin with the raw amino-acid sequence, 241 residues long: 1-(5-phosphoribosyl)-5-[(5-phosphoribosylamino)methylideneamino] imidazole-4-carboxamide isomerase (241 aa).

Asp-8 acts as the Proton acceptor in catalysis. The active-site Proton donor is Asp-130.

The protein belongs to the HisA/HisF family.

It localises to the cytoplasm. It carries out the reaction 1-(5-phospho-beta-D-ribosyl)-5-[(5-phospho-beta-D-ribosylamino)methylideneamino]imidazole-4-carboxamide = 5-[(5-phospho-1-deoxy-D-ribulos-1-ylimino)methylamino]-1-(5-phospho-beta-D-ribosyl)imidazole-4-carboxamide. Its pathway is amino-acid biosynthesis; L-histidine biosynthesis; L-histidine from 5-phospho-alpha-D-ribose 1-diphosphate: step 4/9. This Leptospira borgpetersenii serovar Hardjo-bovis (strain L550) protein is 1-(5-phosphoribosyl)-5-[(5-phosphoribosylamino)methylideneamino] imidazole-4-carboxamide isomerase.